The chain runs to 453 residues: Succinate-semialdehyde dehydrogenase (acetylating) (453 aa).

188–193 (ATGGAG) serves as a coordination point for NADP(+). Cysteine 242 is a catalytic residue.

In terms of assembly, homodimer.

It catalyses the reaction succinate semialdehyde + NADP(+) + CoA = succinyl-CoA + NADPH + H(+). Its function is as follows. Catalyzes the reduction of succinate semialdehyde to succinyl-CoA. The enzyme is specific for succinate semialdehyde and succinyl-CoA, and only shows low activity with palmitoyl-CoA. There is no activity with NAD(+) as cosubstrate. In Clostridium kluyveri (strain ATCC 8527 / DSM 555 / NBRC 12016 / NCIMB 10680 / K1), this protein is Succinate-semialdehyde dehydrogenase (acetylating) (sucD).